Reading from the N-terminus, the 197-residue chain is FMN-dependent NADH:quinone oxidoreductase (197 aa).

FMN contacts are provided by residues S10, 16-18 (SQS), 93-96 (MYNF), and 137-140 (TRGG).

It belongs to the azoreductase type 1 family. In terms of assembly, homodimer. The cofactor is FMN.

It carries out the reaction 2 a quinone + NADH + H(+) = 2 a 1,4-benzosemiquinone + NAD(+). The catalysed reaction is N,N-dimethyl-1,4-phenylenediamine + anthranilate + 2 NAD(+) = 2-(4-dimethylaminophenyl)diazenylbenzoate + 2 NADH + 2 H(+). In terms of biological role, quinone reductase that provides resistance to thiol-specific stress caused by electrophilic quinones. Functionally, also exhibits azoreductase activity. Catalyzes the reductive cleavage of the azo bond in aromatic azo compounds to the corresponding amines. The polypeptide is FMN-dependent NADH:quinone oxidoreductase (Shewanella loihica (strain ATCC BAA-1088 / PV-4)).